Reading from the N-terminus, the 491-residue chain is Rab5 GDP/GTP exchange factor (491 aa).

Residues 1–74 (MSLKSERRGI…EEEAFASSQS (74 aa)) are interaction with ubiquitinated proteins. The segment at 13–47 (DQSELLCKKGCGYYGNPAWQGFCSKCWREEYHKAR) adopts an A20-type zinc-finger fold. 4 residues coordinate Zn(2+): Cys19, Cys23, Cys35, and Cys38. A disordered region spans residues 66-85 (EEAFASSQSSQGAQSLTFSK). The span at 69-84 (FASSQSSQGAQSLTFS) shows a compositional bias: low complexity. Ser124 and Ser132 each carry phosphoserine. N6-acetyllysine occurs at positions 151 and 170. The region spanning 232 to 375 (EKKDLAIQKR…IEKLDAQSLN (144 aa)) is the VPS9 domain. Phosphoserine is present on residues Ser373, Ser377, and Ser390. Residues 407-448 (VKQMYKNLDLLSQLNERQERIMNEAKKLEKDLIDWTDGIAKE) adopt a coiled-coil conformation. Residues 462-491 (PPNQPLAAIDSENVENDKLPPPLQPQVYAG) form a disordered region.

Heterodimer with RABEP1. The heterodimer binds RAB4A and RAB5A that have been activated by GTP-binding. Binds TSC2, GGA1, GGA2, GGA3, AP1G1 and AP1G2. Interacts with RAB21, and with 100-fold lower affinity also with RAB22. Interacts with ubiquitinated EGFR. Interacts with RGS14; the interaction is GTP-dependent. Monoubiquitinated. In terms of tissue distribution, expressed in the white matter tracts of the cerebellum, the fimbria hippocampi and the corpus callosum.

The protein localises to the cytoplasm. The protein resides in the early endosome. It is found in the recycling endosome. Its function is as follows. Rab effector protein acting as linker between gamma-adaptin, RAB4A or RAB5A. Involved in endocytic membrane fusion and membrane trafficking of recycling endosomes. Stimulates nucleotide exchange on RAB5A. Can act as a ubiquitin ligase. This chain is Rab5 GDP/GTP exchange factor (Rabgef1), found in Mus musculus (Mouse).